A 471-amino-acid chain; its full sequence is MLGILLQKATATLASGLNSSRAGMFPIALGLLLQLFFDHALAESTFLDKAFSLQAALLPMEHKKRSVNKCCLLTPPPPPMFPPPFFTETNILQEVDLNNLPLEIKPTEPSCKITCIIGPPGPSGPQGPQGIQGIMGPKGEIGEIGRPGRKGRPGVRGPRGMPGSPCSPGPIGPRGEKGDIGLTGLPGARGPMGPKGLTGQKGEKGIIGEKGQQGIKGEMGVMGLPGMLGQKGEMGPKGVSGAPGHRGPVGRPGKRGKTGLKGDIGPPGIMGPSGPPGPSGLPVMSGSGHLMVGPKGERGLPGPVGRCDCNLPQTVVNPSYNKFPTLINPPQVPAIFVVDSEDELEKLNTENALAFRKDQKSLYYRDTVGWLPIQIAPIQQMRQNPTGFCGDEIVQVENGEECDDGNRIVTDSCINCKQAYCGDGYLQSGLEECDGKDFGYHTCKSYLPGSYGELKCTSYCYIDSTGCRYFT.

A signal peptide spans 1–30; sequence MLGILLQKATATLASGLNSSRAGMFPIALG. The tract at residues 70-86 is PRAD; sequence CCLLTPPPPPMFPPPFF. Collagen-like domains are found at residues 118–282 and 293–307; these read GPPG…SGLP and GPKG…VGRC. 2 disordered regions span residues 140–205 and 237–267; these read EIGE…GEKG and KGVS…IGPP. 2 stretches are compositionally biased toward low complexity: residues 155–164 and 242–251; these read VRGPRGMPGS and APGHRGPVGR. 2 consecutive repeat copies span residues 388–413 and 420–443. Positions 388–443 are 2 X 26 AA approximate repeats; sequence FCGDEIVQVENGEECDDGNRIVTDSCINCKQAYCGDGYLQSGLEECDGKDFGYHTC.

This sequence belongs to the COLQ family. The asymmetric form of AChE is a disulfide-bonded oligomer composed of a collagenic subunit (Q) and a variable number of asymmetric (T) catalytic subunits. The N-terminal of the collagenic subunit (Q) associates with the C-terminal of the catalytic subunit (T). As to expression, expressed in electric organs but not in muscle.

The protein localises to the synapse. Its function is as follows. Anchors the catalytic subunits of asymmetric AChE to the synaptic basal lamina. In Torpedo marmorata (Marbled electric ray), this protein is Acetylcholinesterase collagenic tail peptide.